Reading from the N-terminus, the 343-residue chain is Tetraacyldisaccharide 4'-kinase (343 aa).

Residue 51–58 participates in ATP binding; sequence TVGGAGKT.

The protein belongs to the LpxK family.

The catalysed reaction is a lipid A disaccharide + ATP = a lipid IVA + ADP + H(+). Its pathway is glycolipid biosynthesis; lipid IV(A) biosynthesis; lipid IV(A) from (3R)-3-hydroxytetradecanoyl-[acyl-carrier-protein] and UDP-N-acetyl-alpha-D-glucosamine: step 6/6. Its function is as follows. Transfers the gamma-phosphate of ATP to the 4'-position of a tetraacyldisaccharide 1-phosphate intermediate (termed DS-1-P) to form tetraacyldisaccharide 1,4'-bis-phosphate (lipid IVA). This chain is Tetraacyldisaccharide 4'-kinase, found in Xanthobacter autotrophicus (strain ATCC BAA-1158 / Py2).